Consider the following 1585-residue polypeptide: Sterol 3-beta-glucosyltransferase (1585 aa).

Positions 1–18 (MSPPISPTPPPLQPPFPP) are enriched in pro residues. 3 disordered regions span residues 1–151 (MSPP…ESSF), 177–225 (PWEE…PTHT), and 249–279 (YQYA…LPKG). Composition is skewed to polar residues over residues 65 to 92 (DQAT…NAIT), 105 to 123 (DAQT…STHE), and 132 to 148 (PRTS…QMAE). Residues 178-194 (WEEDDDSDDGEDDDEFI) show a composition bias toward acidic residues. The span at 255 to 273 (ETSSRRTSAAGSESSSEGE) shows a compositional bias: low complexity. The GRAM 1 domain maps to 387–555 (ERLMEVFGLE…EAIVDVEKSP (169 aa)). In terms of domain architecture, PH spans 438–530 (LLVKSGPLHK…WVKAIQKVMF (93 aa)). Disordered regions lie at residues 625-645 (TSHA…LGMA) and 666-852 (DGEP…GSES). Positions 670-689 (LEEHSQGPHHNDEDASHLPH) are enriched in basic and acidic residues. Polar residues-rich tracts occupy residues 760 to 785 (TDSS…QASV), 806 to 817 (NKPSVVDSNSAE), and 827 to 840 (SWTS…QMVK). The GRAM 2 domain occupies 862-933 (RKFRTFFALS…RDLYGLKAQK (72 aa)). UDP-alpha-D-glucose contacts are provided by Ser-1043, Arg-1044, Asp-1046, Ile-1358, His-1360, His-1373, Gly-1377, Thr-1378, Asp-1397, and Gln-1398. The disordered stretch occupies residues 1499 to 1552 (NRVRSRSRSRSRSSQGRFSPRRHTVDDDGWSVVSGGSRSRSGSASAVTSPERRP). Residues 1529 to 1545 (SVVSGGSRSRSGSASAV) show a composition bias toward low complexity.

This sequence belongs to the glycosyltransferase 28 family.

The protein resides in the cytoplasm. The protein localises to the membrane. It catalyses the reaction a sterol + UDP-alpha-D-glucose = a sterol 3-beta-D-glucoside + UDP + H(+). The enzyme catalyses ergosterol + UDP-alpha-D-glucose = ergosteryl 3-beta-D-glucoside + UDP + H(+). In terms of biological role, sterol glycosyltransferase responsible for the glycosylation of ergosterol to form ergosterol-glucoside. In Cryptococcus neoformans var. neoformans serotype D (strain B-3501A) (Filobasidiella neoformans), this protein is Sterol 3-beta-glucosyltransferase.